The chain runs to 57 residues: Large ribosomal subunit protein bL32A (57 aa).

The tract at residues 1 to 22 is disordered; it reads MAVPARRTSKTKKRLRRTHEKL. Positions 7–20 are enriched in basic residues; the sequence is RTSKTKKRLRRTHE.

This sequence belongs to the bacterial ribosomal protein bL32 family.

The sequence is that of Large ribosomal subunit protein bL32A (rpmF1) from Enterococcus faecalis (strain ATCC 700802 / V583).